Reading from the N-terminus, the 173-residue chain is Eggshell protein (173 aa).

The signal sequence occupies residues 1–18 (MKQSLTLVFLVAIGYATA). The span at 145–162 (GSGKGKGGGKGGKGGKGG) shows a compositional bias: gly residues. A disordered region spans residues 145-173 (GSGKGKGGGKGGKGGKGGTYKPSHYGGGY).

This Schistosoma mansoni (Blood fluke) protein is Eggshell protein.